Here is a 31-residue protein sequence, read N- to C-terminus: Cytochrome b6-f complex subunit 6 (31 aa).

A helical transmembrane segment spans residues 3-23; it reads TIISYFGFLLASIIFTLILFI.

It belongs to the PetL family. In terms of assembly, the 4 large subunits of the cytochrome b6-f complex are cytochrome b6, subunit IV (17 kDa polypeptide, PetD), cytochrome f and the Rieske protein, while the 4 small subunits are PetG, PetL, PetM and PetN. The complex functions as a dimer.

The protein resides in the plastid. It localises to the chloroplast thylakoid membrane. Its function is as follows. Component of the cytochrome b6-f complex, which mediates electron transfer between photosystem II (PSII) and photosystem I (PSI), cyclic electron flow around PSI, and state transitions. PetL is important for photoautotrophic growth as well as for electron transfer efficiency and stability of the cytochrome b6-f complex. The polypeptide is Cytochrome b6-f complex subunit 6 (Abies homolepis (Nikko fir)).